A 512-amino-acid polypeptide reads, in one-letter code: Inosine-5'-monophosphate dehydrogenase (512 aa).

2 consecutive CBS domains span residues 110–169 (FIMK…SAPV) and 173–231 (MTRR…PNSS). Residues 268-270 (DSS) and 318-320 (GMG) each bind NAD(+). Residues Gly-320 and Gly-322 each contribute to the K(+) site. Ser-323 serves as a coordination point for IMP. Cys-325 is a binding site for K(+). Catalysis depends on Cys-325, which acts as the Thioimidate intermediate. IMP is bound by residues 358–360 (DGG), 381–382 (GS), and 405–409 (YRGMG). The Proton acceptor role is filled by Arg-423. Gln-435 serves as a coordination point for IMP. K(+) is bound by residues Glu-494 and Gly-495. Residues 510–512 (SKL) carry the Microbody targeting signal motif.

Belongs to the IMPDH/GMPR family. As to quaternary structure, homotetramer. Requires K(+) as cofactor.

It localises to the glycosome. The enzyme catalyses IMP + NAD(+) + H2O = XMP + NADH + H(+). The protein operates within purine metabolism; XMP biosynthesis via de novo pathway; XMP from IMP: step 1/1. Mycophenolic acid (MPA) is a non-competitive inhibitor that prevents formation of the closed enzyme conformation by binding to the same site as the amobile flap. In contrast, mizoribine monophosphate (MZP) is a competitive inhibitor that induces the closed conformation. MPA is a potent inhibitor of mammalian IMPDHs but a poor inhibitor of the bacterial enzymes. MZP is a more potent inhibitor of bacterial IMPDH. Its function is as follows. Catalyzes the conversion of inosine 5'-phosphate (IMP) to xanthosine 5'-phosphate (XMP), the first committed and rate-limiting step in the de novo synthesis of guanine nucleotides, and therefore plays an important role in the regulation of cell growth. The chain is Inosine-5'-monophosphate dehydrogenase from Trypanosoma brucei brucei.